Here is a 181-residue protein sequence, read N- to C-terminus: ATP synthase subunit delta (181 aa).

This sequence belongs to the ATPase delta chain family. In terms of assembly, F-type ATPases have 2 components, F(1) - the catalytic core - and F(0) - the membrane proton channel. F(1) has five subunits: alpha(3), beta(3), gamma(1), delta(1), epsilon(1). F(0) has three main subunits: a(1), b(2) and c(10-14). The alpha and beta chains form an alternating ring which encloses part of the gamma chain. F(1) is attached to F(0) by a central stalk formed by the gamma and epsilon chains, while a peripheral stalk is formed by the delta and b chains.

The protein resides in the cell membrane. In terms of biological role, f(1)F(0) ATP synthase produces ATP from ADP in the presence of a proton or sodium gradient. F-type ATPases consist of two structural domains, F(1) containing the extramembraneous catalytic core and F(0) containing the membrane proton channel, linked together by a central stalk and a peripheral stalk. During catalysis, ATP synthesis in the catalytic domain of F(1) is coupled via a rotary mechanism of the central stalk subunits to proton translocation. Functionally, this protein is part of the stalk that links CF(0) to CF(1). It either transmits conformational changes from CF(0) to CF(1) or is implicated in proton conduction. This Lactiplantibacillus plantarum (strain ATCC BAA-793 / NCIMB 8826 / WCFS1) (Lactobacillus plantarum) protein is ATP synthase subunit delta.